We begin with the raw amino-acid sequence, 319 residues long: Aspartate carbamoyltransferase catalytic subunit (319 aa).

The carbamoyl phosphate site is built by Arg-65 and Thr-66. Lys-93 is a binding site for L-aspartate. Positions 115, 149, and 152 each coordinate carbamoyl phosphate. Arg-182 and Arg-237 together coordinate L-aspartate. 2 residues coordinate carbamoyl phosphate: Gly-278 and Pro-279.

It belongs to the aspartate/ornithine carbamoyltransferase superfamily. ATCase family. Heterododecamer (2C3:3R2) of six catalytic PyrB chains organized as two trimers (C3), and six regulatory PyrI chains organized as three dimers (R2).

The catalysed reaction is carbamoyl phosphate + L-aspartate = N-carbamoyl-L-aspartate + phosphate + H(+). The protein operates within pyrimidine metabolism; UMP biosynthesis via de novo pathway; (S)-dihydroorotate from bicarbonate: step 2/3. In terms of biological role, catalyzes the condensation of carbamoyl phosphate and aspartate to form carbamoyl aspartate and inorganic phosphate, the committed step in the de novo pyrimidine nucleotide biosynthesis pathway. This Dechloromonas aromatica (strain RCB) protein is Aspartate carbamoyltransferase catalytic subunit.